Consider the following 891-residue polypeptide: Dynein axonemal intermediate chain 3 (891 aa).

Residues 1-17 (MAPKQKKKTSRGKKRLK) are compositionally biased toward basic residues. The tract at residues 1–22 (MAPKQKKKTSRGKKRLKPVLAA) is disordered. 4 WD repeats span residues 395 to 435 (ESPD…DRIE), 477 to 533 (GHKK…PLTP), 670 to 709 (IHDGTVHTIQRSPFYNDIILTVGGWNVAIWKEGVMTGPLL), and 713 to 753 (CAPK…HEPA). The stretch at 818–861 (LEYVEQRKKIREQEKKEMELEMAKKKVKTYQKSKEQMQAELKMD) forms a coiled coil.

As to quaternary structure, interacts with ACTR2; this interaction reduces binding of the Arp2/3 complex to the VCA domain of nucleation promoting factors. Part of the multisubunit axonemal dynein complex formed at least of two heavy chains and a number of intermediate and light chains. Found in a associated with the catalytic heavy chain DNAH2, the intermediate chain DNAI4, and the light chain DYNLT1.

The protein resides in the cytoplasm. Its function is as follows. Acts as a negative regulator of cell migration, invasion, and metastasis downstream of p53/TP53, through inhibition of Arp2/3 complex-mediated actin polymerization. Via its association with the multisubunit axonemal dynein complex, is potentially involved in the regulation of cilia function. May play a role in osteogenesis of dental tissue-derived mesenchymal stem cells. In Homo sapiens (Human), this protein is Dynein axonemal intermediate chain 3.